The primary structure comprises 189 residues: Inosine triphosphate pyrophosphatase (189 aa).

8 to 13 (TGNANK) contributes to the ITP binding site. Position 39 (E39) interacts with Mg(2+). ITP contacts are provided by residues K51, 67 to 68 (DT), K84, 143 to 146 (FGWD), K167, and 172 to 173 (HR).

It belongs to the HAM1 NTPase family. As to quaternary structure, homodimer. Mg(2+) serves as cofactor. It depends on Mn(2+) as a cofactor.

The protein resides in the cytoplasm. It is found in the nucleus. The catalysed reaction is ITP + H2O = IMP + diphosphate + H(+). The enzyme catalyses dITP + H2O = dIMP + diphosphate + H(+). It catalyses the reaction XTP + H2O = XMP + diphosphate + H(+). Pyrophosphatase that hydrolyzes non-canonical purine nucleotides such as inosine triphosphate (ITP), deoxyinosine triphosphate (dITP) or xanthosine 5'-triphosphate (XTP) to their respective monophosphate derivatives. The enzyme does not distinguish between the deoxy- and ribose forms. Probably excludes non-canonical purines from RNA and DNA precursor pools, thus preventing their incorporation into RNA and DNA and avoiding chromosomal lesions. The chain is Inosine triphosphate pyrophosphatase from Cryptococcus neoformans var. neoformans serotype D (strain JEC21 / ATCC MYA-565) (Filobasidiella neoformans).